The sequence spans 137 residues: Large ribosomal subunit protein eL32 (137 aa).

Residues 95 to 137 (PSAAEIATPVSSRKRIASSPARQADRCSRSRRSKFRPRRLRAS) form a disordered region. The segment covering 123 to 137 (RSRRSKFRPRRLRAS) has biased composition (basic residues).

This sequence belongs to the eukaryotic ribosomal protein eL32 family.

In Trichoderma harzianum (Hypocrea lixii), this protein is Large ribosomal subunit protein eL32 (rpl32).